Reading from the N-terminus, the 357-residue chain is Homoserine O-acetyltransferase (357 aa).

Positions 51–340 constitute an AB hydrolase-1 domain; sequence NVIVICHALT…EPYGHDAFLI (290 aa). Catalysis depends on serine 147, which acts as the Nucleophile. Arginine 216 is a substrate binding site. Active-site residues include aspartate 306 and histidine 335. Aspartate 336 contributes to the substrate binding site.

This sequence belongs to the AB hydrolase superfamily. MetX family. Homodimer.

The protein localises to the cytoplasm. It carries out the reaction L-homoserine + acetyl-CoA = O-acetyl-L-homoserine + CoA. The protein operates within amino-acid biosynthesis; L-methionine biosynthesis via de novo pathway; O-acetyl-L-homoserine from L-homoserine: step 1/1. Its function is as follows. Transfers an acetyl group from acetyl-CoA to L-homoserine, forming acetyl-L-homoserine. The protein is Homoserine O-acetyltransferase of Chlorobium chlorochromatii (strain CaD3).